The chain runs to 482 residues: tRNA sulfurtransferase (482 aa).

The THUMP domain maps to 61-165; the sequence is DQILAILMQT…YDHLHQVLHR (105 aa). ATP-binding positions include 183-184, K265, G287, and Q296; that span reads LI. The cysteines at positions 344 and 456 are disulfide-linked. One can recognise a Rhodanese domain in the interval 404 to 482; it reads IGDGAIVLDI…GYGNIKVYRP (79 aa). Catalysis depends on C456, which acts as the Cysteine persulfide intermediate.

Belongs to the ThiI family.

The protein localises to the cytoplasm. It carries out the reaction [ThiI sulfur-carrier protein]-S-sulfanyl-L-cysteine + a uridine in tRNA + 2 reduced [2Fe-2S]-[ferredoxin] + ATP + H(+) = [ThiI sulfur-carrier protein]-L-cysteine + a 4-thiouridine in tRNA + 2 oxidized [2Fe-2S]-[ferredoxin] + AMP + diphosphate. The catalysed reaction is [ThiS sulfur-carrier protein]-C-terminal Gly-Gly-AMP + S-sulfanyl-L-cysteinyl-[cysteine desulfurase] + AH2 = [ThiS sulfur-carrier protein]-C-terminal-Gly-aminoethanethioate + L-cysteinyl-[cysteine desulfurase] + A + AMP + 2 H(+). It functions in the pathway cofactor biosynthesis; thiamine diphosphate biosynthesis. Its function is as follows. Catalyzes the ATP-dependent transfer of a sulfur to tRNA to produce 4-thiouridine in position 8 of tRNAs, which functions as a near-UV photosensor. Also catalyzes the transfer of sulfur to the sulfur carrier protein ThiS, forming ThiS-thiocarboxylate. This is a step in the synthesis of thiazole, in the thiamine biosynthesis pathway. The sulfur is donated as persulfide by IscS. The chain is tRNA sulfurtransferase from Photobacterium profundum (strain SS9).